The following is a 1489-amino-acid chain: ZEB2-regulated ABC transporter 1 (1489 aa).

The interval 1–55 (MALPEANMSSTRSEQSSRSHDTIVGNEQPHSEKPAASAPGDQMSSDDEDEGPQTE) is disordered. Residue Asn7 is glycosylated (N-linked (GlcNAc...) asparagine). Acidic residues predominate over residues 44-53 (SSDDEDEGPQ). N-linked (GlcNAc...) asparagine glycosylation is found at Asn70, Asn73, Asn118, Asn332, and Asn469. The 257-residue stretch at 152-408 (LGLPDMVHQM…FINLGFECPD (257 aa)) folds into the ABC transporter 1 domain. The next 5 membrane-spanning stretches (helical) occupy residues 513-533 (LLGS…VAFI), 552-572 (GATL…EILT), 599-619 (ILVD…TLYF), 628-648 (GAFF…SGVF), and 662-682 (MVPA…VVPV). N-linked (GlcNAc...) asparagine glycosylation occurs at Asn714. Residues 773–793 (GILIAMTIFNHVVYIVATEFI) form a helical membrane-spanning segment. The disordered stretch occupies residues 811-834 (PSKAKSDPEASSSRPIPTTEKNNN). Residues 819 to 834 (EASSSRPIPTTEKNNN) show a composition bias toward polar residues. Positions 846-1088 (FHWNDVCYDI…TLTNYFVKHG (243 aa)) constitute an ABC transporter 2 domain. 882–889 (GVSGAGKT) contacts ATP. 5 helical membrane passes run 1190 to 1210 (ALCI…PLSL), 1218 to 1238 (FAIF…MPHF), 1269 to 1289 (IPWN…PVGF), 1307 to 1327 (WLLI…AIAI), and 1333 to 1353 (AGGN…GVLA). The N-linked (GlcNAc...) asparagine glycan is linked to Asn1402. The chain crosses the membrane as a helical span at residues 1457 to 1477 (GIGMVYIVVNIVGALFLYWLI).

This sequence belongs to the ABC transporter superfamily. ABCG family. PDR (TC 3.A.1.205) subfamily.

It localises to the cell membrane. Its subcellular location is the vacuole membrane. In terms of biological role, ABC transporter involved in zearalenone production. The sequence is that of ZEB2-regulated ABC transporter 1 from Gibberella zeae (strain ATCC MYA-4620 / CBS 123657 / FGSC 9075 / NRRL 31084 / PH-1) (Wheat head blight fungus).